Consider the following 536-residue polypeptide: Thiamine transport system permease protein ThiP (536 aa).

Transmembrane regions (helical) follow at residues 16-36, 58-78, 95-115, 134-154, 199-219, 240-260, 291-311, 334-354, 373-393, 404-424, 463-483, and 506-526; these read GLCA…ALWL, FSFW…VFLA, LCAM…LSVY, FSPY…LPMA, VAAL…SLGG, PARA…LVLL, DALL…AVVV, SLRI…MLLW, LSGM…FFLL, ADGI…LKVL, AQAL…VALF, and DGAV…TLIE. Residues 56 to 261 enclose the ABC transmembrane type-1 1 domain; it reads VRFSFWQAFL…VCCLALVLLS (206 aa). The 195-residue stretch at 331–525 folds into the ABC transmembrane type-1 2 domain; the sequence is VWTSLRIALA…LLCFTLFTLI (195 aa).

It belongs to the binding-protein-dependent transport system permease family. As to quaternary structure, the complex is composed of two ATP-binding proteins (ThiQ), two transmembrane proteins (ThiP) and a solute-binding protein (ThiB).

It localises to the cell inner membrane. In terms of biological role, part of the ABC transporter complex ThiBPQ involved in thiamine import. Probably responsible for the translocation of the substrate across the membrane. Is also involved in thiamine pyrophosphate transport. The protein is Thiamine transport system permease protein ThiP of Salmonella typhimurium (strain LT2 / SGSC1412 / ATCC 700720).